The sequence spans 446 residues: tRNA-2-methylthio-N(6)-dimethylallyladenosine synthase (446 aa).

An MTTase N-terminal domain is found at 5 to 121; the sequence is KYLYVETFGC…LPEIVRAAER (117 aa). Positions 14, 50, 84, 159, 163, and 166 each coordinate [4Fe-4S] cluster. The Radical SAM core domain maps to 145 to 375; it reads GEGGVTRFVT…QTLQQQMKRE (231 aa). One can recognise a TRAM domain in the interval 378-440; the sequence is ISFVGTRQLV…QNSLLGEIVT (63 aa).

This sequence belongs to the methylthiotransferase family. MiaB subfamily. As to quaternary structure, monomer. Requires [4Fe-4S] cluster as cofactor.

Its subcellular location is the cytoplasm. The catalysed reaction is N(6)-dimethylallyladenosine(37) in tRNA + (sulfur carrier)-SH + AH2 + 2 S-adenosyl-L-methionine = 2-methylsulfanyl-N(6)-dimethylallyladenosine(37) in tRNA + (sulfur carrier)-H + 5'-deoxyadenosine + L-methionine + A + S-adenosyl-L-homocysteine + 2 H(+). Its function is as follows. Catalyzes the methylthiolation of N6-(dimethylallyl)adenosine (i(6)A), leading to the formation of 2-methylthio-N6-(dimethylallyl)adenosine (ms(2)i(6)A) at position 37 in tRNAs that read codons beginning with uridine. The polypeptide is tRNA-2-methylthio-N(6)-dimethylallyladenosine synthase (Geobacter sulfurreducens (strain ATCC 51573 / DSM 12127 / PCA)).